The chain runs to 322 residues: uncharacterized protein (322 aa).

Polar residues predominate over residues 1–13 (MTNADEQNMGQQE). Disordered stretches follow at residues 1–94 (MTNA…EEYE) and 125–322 (RREM…TDEE). Low complexity predominate over residues 14–31 (GTDTATTAQDTNTQTVGT). The segment covering 32–50 (QSENTQNTQQASDAQTEQT) has biased composition (polar residues). Residues 64–75 (EVDEDDVLDAQE) show a composition bias toward acidic residues. Basic and acidic residues-rich tracts occupy residues 141 to 227 (GGDR…RGGD), 235 to 269 (RPRE…RGGD), 277 to 295 (RPRE…RTDD), and 308 to 322 (ARAD…TDEE).

This is an uncharacterized protein from Deinococcus radiodurans (strain ATCC 13939 / DSM 20539 / JCM 16871 / CCUG 27074 / LMG 4051 / NBRC 15346 / NCIMB 9279 / VKM B-1422 / R1).